The chain runs to 312 residues: Small kinetochore-associated protein (312 aa).

Positions 1–171 (MAAPEAEAQE…PFNKQKPEEE (171 aa)) are disordered. Basic and acidic residues predominate over residues 131–143 (DVTKVTKSRRENG). The interaction with SPAG5 stretch occupies residues 156–312 (LRNSYKPFNK…LEEMEQLLEM (157 aa)). 2 coiled-coil regions span residues 166 to 210 (QKPE…LEKF) and 246 to 287 (LLET…QFLE).

In terms of assembly, part of an astrin (SPAG5)-kinastrin (SKAP) complex containing KNSTRN, SPAG5, PLK1, DYNLL1 and SGO2A. Interacts with SPAG5. Directly binds to microtubules, although at relatively low affinity. Interacts with CENPE; this interaction greatly favors microtubule-binding. Interacts with DSN1/MIS13; leading to localization to kinetochores. Interacts with MAPRE1/EB1; leading to localization to the microtubule plus ends. Interacts with PRPF19. Interacts with DYNLL1. Interacts with MAP4.

It localises to the nucleus. The protein resides in the chromosome. Its subcellular location is the centromere. The protein localises to the kinetochore. It is found in the cytoplasm. It localises to the cytoskeleton. The protein resides in the spindle pole. Its subcellular location is the microtubule organizing center. Essential component of the mitotic spindle required for faithful chromosome segregation and progression into anaphase. Promotes the metaphase-to-anaphase transition and is required for chromosome alignment, normal timing of sister chromatid segregation, and maintenance of spindle pole architecture. The astrin (SPAG5)-kinastrin (SKAP) complex promotes stable microtubule-kinetochore attachments. Required for kinetochore oscillations and dynamics of microtubule plus-ends during live cell mitosis, possibly by forming a link between spindle microtubule plus-ends and mitotic chromosomes to achieve faithful cell division. The chain is Small kinetochore-associated protein (Knstrn) from Mus musculus (Mouse).